The following is a 461-amino-acid chain: PTS system sucrose-specific EIIBC component (461 aa).

A PTS EIIB type-1 domain is found at 4 to 87; sequence KETAKRLIEL…SKEADIEREE (84 aa). Residue Cys-26 is the Phosphocysteine intermediate; for EIIB activity of the active site. Residues 107–461 enclose the PTS EIIC type-1 domain; it reads KTLSNIFVPI…KINEDEERKK (355 aa). Transmembrane regions (helical) follow at residues 112–132, 148–168, 178–198, 208–228, 248–268, 289–309, 329–349, 359–379, 387–407, and 430–450; these read IFVPIIPAIVASGLLMGLLGM, LLDMFSSAAFIFLPILIGVSA, LGAVIGGIMIHPNLLNPWGLA, FGFDIALLGYQGTVIPVLLAV, LLVTPFVTVIVTGFVAFIAIG, AGFVAGLIFGGTYSLIVLTGV, LLPIWSMANVAQGGAGLAVFF, IALPAAFSAFLGITEPVIFGV, FIAAMIGGALGGAYVVFTHVA, and LIHYLIGMAIAAVSAFIAAFV.

The protein resides in the cell membrane. The enzyme catalyses N(pros)-phospho-L-histidyl-[protein](out) + sucrose = sucrose 6(G)-phosphate(in) + L-histidyl-[protein]. The phosphoenolpyruvate-dependent sugar phosphotransferase system (sugar PTS), a major carbohydrate active transport system, catalyzes the phosphorylation of incoming sugar substrates concomitantly with their translocation across the cell membrane. This system is involved in sucrose transport. This is PTS system sucrose-specific EIIBC component (sacP) from Bacillus subtilis (strain 168).